The primary structure comprises 422 residues: Protein FAM53B (422 aa).

Phosphoserine is present on residues serine 118, serine 167, serine 169, serine 179, serine 212, and serine 268. Positions serine 245 to serine 268 are enriched in low complexity. The disordered stretch occupies residues serine 245–glutamine 269. The Nuclear localization signal signature appears at lysine 281–arginine 284.

This sequence belongs to the FAM53 family. As to quaternary structure, interacts with CTNNB1. Detected in skeletal muscle, kidney, spleen, thyroid, testis, ovary, small intestine, colon and peripheral blood.

It is found in the nucleus. Acts as a regulator of Wnt signaling pathway by regulating beta-catenin (CTNNB1) nuclear localization. The polypeptide is Protein FAM53B (Homo sapiens (Human)).